A 266-amino-acid chain; its full sequence is Thiazole synthase (266 aa).

Lys-110 (schiff-base intermediate with DXP) is an active-site residue. 1-deoxy-D-xylulose 5-phosphate is bound by residues Gly-171, 197–198 (AG), and 219–220 (AT).

The protein belongs to the ThiG family. Homotetramer. Forms heterodimers with either ThiH or ThiS.

It localises to the cytoplasm. It catalyses the reaction [ThiS sulfur-carrier protein]-C-terminal-Gly-aminoethanethioate + 2-iminoacetate + 1-deoxy-D-xylulose 5-phosphate = [ThiS sulfur-carrier protein]-C-terminal Gly-Gly + 2-[(2R,5Z)-2-carboxy-4-methylthiazol-5(2H)-ylidene]ethyl phosphate + 2 H2O + H(+). Its pathway is cofactor biosynthesis; thiamine diphosphate biosynthesis. Its function is as follows. Catalyzes the rearrangement of 1-deoxy-D-xylulose 5-phosphate (DXP) to produce the thiazole phosphate moiety of thiamine. Sulfur is provided by the thiocarboxylate moiety of the carrier protein ThiS. In vitro, sulfur can be provided by H(2)S. The protein is Thiazole synthase of Thermobifida fusca (strain YX).